The primary structure comprises 557 residues: Dihydroxy-acid dehydratase (557 aa).

Asp-78 is a Mg(2+) binding site. Position 119 (Cys-119) interacts with [2Fe-2S] cluster. The Mg(2+) site is built by Asp-120 and Lys-121. N6-carboxylysine is present on Lys-121. Cys-192 lines the [2Fe-2S] cluster pocket. Residue Glu-442 participates in Mg(2+) binding. Ser-468 acts as the Proton acceptor in catalysis.

It belongs to the IlvD/Edd family. Homodimer. It depends on [2Fe-2S] cluster as a cofactor. The cofactor is Mg(2+).

The catalysed reaction is (2R)-2,3-dihydroxy-3-methylbutanoate = 3-methyl-2-oxobutanoate + H2O. The enzyme catalyses (2R,3R)-2,3-dihydroxy-3-methylpentanoate = (S)-3-methyl-2-oxopentanoate + H2O. It participates in amino-acid biosynthesis; L-isoleucine biosynthesis; L-isoleucine from 2-oxobutanoate: step 3/4. The protein operates within amino-acid biosynthesis; L-valine biosynthesis; L-valine from pyruvate: step 3/4. Functionally, functions in the biosynthesis of branched-chain amino acids. Catalyzes the dehydration of (2R,3R)-2,3-dihydroxy-3-methylpentanoate (2,3-dihydroxy-3-methylvalerate) into 2-oxo-3-methylpentanoate (2-oxo-3-methylvalerate) and of (2R)-2,3-dihydroxy-3-methylbutanoate (2,3-dihydroxyisovalerate) into 2-oxo-3-methylbutanoate (2-oxoisovalerate), the penultimate precursor to L-isoleucine and L-valine, respectively. The polypeptide is Dihydroxy-acid dehydratase (Bacillus mycoides (strain KBAB4) (Bacillus weihenstephanensis)).